Reading from the N-terminus, the 1337-residue chain is MEHRYNVFNDTPRGNHWMGSSVSGSPRPSYSSRPNVNTTRRFQYSDDEPAEKIRPLRSRSFKSTESNISDEKSRISERDSKDRYINGDKKVDIYSLPLISTDVLEISKQRTFAVILFLIIQCYKIYDLVILKSGLPLSGLLFKNYRFNFISKYFIIDSFFLYVLPSFNIPRLTFKPWVVYLQILAMLLLNIFISSDHEFVLISLIMTTWRKLYTKELSVTGSAINHHRIFDSSAHFKGALTIKILPENTAMFNPLHESYCLPMDTNLFKINSIDVPIRINSTEEIEYIELEYRDLYTNSVELRSLSKKDFKIIDNPKSFLKKDQSVLKSHSNDFEEGSTIRYLAVTLQDIGFYQIKKIVDSKKLNLKIHQSHLVVPYCPIASITGTGSNDRCIGDSDNVSFEIQGVPPMKLAYSKIVNGQTFSYVDSSLQPEYFESPLQSSKSKQSFTQGELNDLKWGRNQPVNINLDSSITQDGKFAYKIDKITDGLGNVVDFTSLPEELKKRYDLSYNFNVHEVPRAALEERFDPKSPTKRSIAIVFEEIKNWISDIPYVISLSYTDAQDKSKKIMNVTTDSLTKVLQADLPGSYNLEYIESKFCPGEIVGKSNVLVTMPVAPTMEVKSFPILDQCVGQVGLNFELSFTGAPPYYYNTKIYKLENGERKLYDAKRYTSEGTRNRFSYSPPKEGNYEIVFDTVSNKLFTEPIKLEPVKEYTFKTSMRVKPSASLKLHHDLKLCLGDHSSVPVALKGQGPFTLTYDIIETFSSKRKTFEIKEIKTNEYVIKTPVFTTGGDYILSLVSIKDSTGCVVGLSQPDAKIQVRRDIPSAAFNFFEPIKEAKIKHGSVTEIPLKLSGEGPFTVKFKHMDYDGNIVKEFENKFQNSYKPALKVSKEGLYQLVDIRDSSCQGNVIYRNSLYKVSFLEKPKFAIQDNHHITKVTENLFSKEEVCQGMEGTVDLALFGSPPFILEYDLMAPNGHISTKKIQVATKYASLKLPNQIPGEYITTIKAIFDGNYGESDIHFREHQSELIIKQTVHPIPDVAFADGGKTLRACAANVDQISFLEPINLKFLQGESPFSITFSVYHESTSRTDQYTIDNIDSENFSFEKLYEGMKLGNHAITIDSVVDANGCVNSLISGPRNQILVSITDAPKIHILDPSTEYCVGDYVAYQLNGVAPFMIKYEFNGIPLKSKERSSQFVRLASEPGIISITSLQDSSSQCIVDFTNPKLKSEFDDLSLNIHPIPSVTVSQGNYVTEDIREGDQAEVIFSFEGTPPFSLTYVRTEETDGKHGKRRSQVVETHKVTDIYSHEYKVITSLQGTYEAIEITDAYCFAKNDLFFNN.

Residues 1-48 (MEHRYNVFNDTPRGNHWMGSSVSGSPRPSYSSRPNVNTTRRFQYSDDE) are disordered. Residues 1–110 (MEHRYNVFND…TDVLEISKQR (110 aa)) lie on the Cytoplasmic side of the membrane. Residues 1-175 (MEHRYNVFND…SFNIPRLTFK (175 aa)) form a pore side region. Over residues 19–37 (GSSVSGSPRPSYSSRPNVN) the composition is skewed to low complexity. Phosphoserine is present on residues serine 45 and serine 60. A helical transmembrane segment spans residues 111 to 131 (TFAVILFLIIQCYKIYDLVIL). Over 132–148 (KSGLPLSGLLFKNYRFN) the chain is Perinuclear space. The helical transmembrane segment at 149 to 169 (FISKYFIIDSFFLYVLPSFNI) threads the bilayer. Over 170–172 (PRL) the chain is Cytoplasmic. The helical transmembrane segment at 173 to 193 (TFKPWVVYLQILAMLLLNIFI) threads the bilayer. The Perinuclear space portion of the chain corresponds to 194–1337 (SSDHEFVLIS…FAKNDLFFNN (1144 aa)). The tract at residues 196 to 1337 (DHEFVLISLI…FAKNDLFFNN (1142 aa)) is cisternal side. Asparagine 280 carries N-linked (GlcNAc...) asparagine glycosylation. 8 tandem repeats follow at residues 390–413 (DRCI…KLAY), 626–650 (DQCV…YYNT), 732–755 (KLCL…TLTY), 836–859 (KIKH…TVKF), 943–966 (EVCQ…ILEY), 1058–1077 (FLEP…SITF), 1157–1178 (EYCV…MIKY), and 1253–1276 (DIRE…SLTY). The interval 390-1276 (DRCIGDSDNV…EGTPPFSLTY (887 aa)) is 8 X 24 AA approximate repeats.

Component of the nuclear pore complex (NPC). NPC constitutes the exclusive means of nucleocytoplasmic transport. NPCs allow the passive diffusion of ions and small molecules and the active, nuclear transport receptor-mediated bidirectional transport of macromolecules such as proteins, RNAs, ribonucleoparticles (RNPs), and ribosomal subunits across the nuclear envelope. Due to its 8-fold rotational symmetry, all subunits are present with 8 copies or multiples thereof. Interacts with NUP188. Post-translationally, the N-terminus is blocked. In terms of processing, phosphorylated by CDC28.

The protein localises to the nucleus. Its subcellular location is the nuclear pore complex. It localises to the nucleus membrane. Its function is as follows. Functions as a component of the nuclear pore complex (NPC). NPC components, collectively referred to as nucleoporins (NUPs), can play the role of both NPC structural components and of docking or interaction partners for transiently associated nuclear transport factors. POM152 is important for the de novo assembly of NPCs. In Saccharomyces cerevisiae (strain ATCC 204508 / S288c) (Baker's yeast), this protein is Nucleoporin POM152 (POM152).